Here is a 152-residue protein sequence, read N- to C-terminus: Ribosome maturation factor RimP (152 aa).

This sequence belongs to the RimP family.

It is found in the cytoplasm. In terms of biological role, required for maturation of 30S ribosomal subunits. The polypeptide is Ribosome maturation factor RimP (Paraburkholderia phymatum (strain DSM 17167 / CIP 108236 / LMG 21445 / STM815) (Burkholderia phymatum)).